The following is a 1607-amino-acid chain: Abnormal cell migration protein 38 (1607 aa).

Disordered stretches follow at residues 14-52, 67-93, 167-222, 326-425, 459-478, 549-594, 845-931, 1017-1061, 1141-1241, 1319-1378, 1392-1445, and 1517-1607; these read EFNK…SQDF, RLSP…QYHV, STSY…AAQA, GSSA…PPSQ, SPNT…GMDQ, MVHR…QHSY, YDEN…PETE, SVQV…DYDM, EPSP…VTPK, ETPN…KGQL, FANV…PQAV, and KVKT…STDP. Composition is skewed to polar residues over residues 81-93 and 179-191; these read PGPS…QYHV and PSGN…NHQQ. Residues 195–205 show a composition bias toward low complexity; sequence VPQVQQQPAKP. The segment covering 206 to 218 has biased composition (basic residues); sequence KTTKKRPPPKKKT. Over residues 327-341 the composition is skewed to low complexity; it reads SSASSSAQPSQPAKK. Composition is skewed to polar residues over residues 349-371 and 379-425; these read VPNT…QITP and PTTT…PPSQ. Over residues 585 to 594 the composition is skewed to low complexity; the sequence is NSHSQSQHSY. Acidic residues predominate over residues 858-871; the sequence is EEPESESESEPEAE. 2 stretches are compositionally biased toward basic and acidic residues: residues 872–886 and 907–917; these read PEPK…EPAR and YRNESESTFDW. Composition is skewed to low complexity over residues 1333-1354, 1395-1419, and 1584-1601; these read PNIP…SVSV, VPSS…VSAK, and LLGT…SSGL.

In terms of tissue distribution, expressed in gonad distal tip cells and gonad sheath cells.

It is found in the nucleus. The protein resides in the cytoplasm. Functionally, during gonad development, involved in distal tip cell (DTC) migration from the dorsal side of the hermaphrodite body to the midbody which allows for the formation of gonad arms. Role in gonad DTC migration may be in association with integrin related proteins ina-1 and mig-15. This Caenorhabditis elegans protein is Abnormal cell migration protein 38.